The chain runs to 156 residues: Phytohormone-binding protein (156 aa).

Gln-22, Gln-68, and Thr-141 together coordinate gibberellin A3.

It belongs to the BetVI family.

Its function is as follows. Binds gibberellin A3 (GA3) in vitro. The polypeptide is Phytohormone-binding protein (Medicago truncatula (Barrel medic)).